Consider the following 224-residue polypeptide: 7-cyano-7-deazaguanine synthase (224 aa).

ATP is bound at residue 9–19 (LSGGLDSATVL). Positions 189, 199, 202, and 205 each coordinate Zn(2+).

Belongs to the QueC family. The cofactor is Zn(2+).

The catalysed reaction is 7-carboxy-7-deazaguanine + NH4(+) + ATP = 7-cyano-7-deazaguanine + ADP + phosphate + H2O + H(+). It participates in purine metabolism; 7-cyano-7-deazaguanine biosynthesis. In terms of biological role, catalyzes the ATP-dependent conversion of 7-carboxy-7-deazaguanine (CDG) to 7-cyano-7-deazaguanine (preQ(0)). In Ralstonia nicotianae (strain ATCC BAA-1114 / GMI1000) (Ralstonia solanacearum), this protein is 7-cyano-7-deazaguanine synthase.